The following is a 331-amino-acid chain: Glutamyl-Q tRNA(Asp) synthetase (331 aa).

The segment covering 1-30 has biased composition (polar residues); it reads MVQQAVIQRSANQQLSNQRSANQRATNQPT. The segment at 1-36 is disordered; it reads MVQQAVIQRSANQQLSNQRSANQRATNQPTEYVGRF. Residues 35 to 39 and Glu71 each bind L-glutamate; that span reads RFAPS. The short motif at 38–48 is the 'HIGH' region element; sequence PSPSGDLHFGS. Cys127, Cys129, Tyr141, and Cys145 together coordinate Zn(2+). L-glutamate contacts are provided by Tyr198 and Arg216. Positions 254-258 match the 'KMSKS' region motif; the sequence is KLSKQ. Residue Lys257 coordinates ATP.

It belongs to the class-I aminoacyl-tRNA synthetase family. GluQ subfamily. The cofactor is Zn(2+).

Catalyzes the tRNA-independent activation of glutamate in presence of ATP and the subsequent transfer of glutamate onto a tRNA(Asp). Glutamate is transferred on the 2-amino-5-(4,5-dihydroxy-2-cyclopenten-1-yl) moiety of the queuosine in the wobble position of the QUC anticodon. The polypeptide is Glutamyl-Q tRNA(Asp) synthetase (Yersinia pseudotuberculosis serotype I (strain IP32953)).